We begin with the raw amino-acid sequence, 444 residues long: Methylenetetrahydrofolate--tRNA-(uracil-5-)-methyltransferase TrmFO (444 aa).

10–15 is an FAD binding site; sequence GAGLAG.

It belongs to the MnmG family. TrmFO subfamily. FAD is required as a cofactor.

The protein resides in the cytoplasm. It carries out the reaction uridine(54) in tRNA + (6R)-5,10-methylene-5,6,7,8-tetrahydrofolate + NADH + H(+) = 5-methyluridine(54) in tRNA + (6S)-5,6,7,8-tetrahydrofolate + NAD(+). The catalysed reaction is uridine(54) in tRNA + (6R)-5,10-methylene-5,6,7,8-tetrahydrofolate + NADPH + H(+) = 5-methyluridine(54) in tRNA + (6S)-5,6,7,8-tetrahydrofolate + NADP(+). Functionally, catalyzes the folate-dependent formation of 5-methyl-uridine at position 54 (M-5-U54) in all tRNAs. This Streptococcus pneumoniae (strain Taiwan19F-14) protein is Methylenetetrahydrofolate--tRNA-(uracil-5-)-methyltransferase TrmFO.